Reading from the N-terminus, the 119-residue chain is Holo-[acyl-carrier-protein] synthase (119 aa).

Positions 7 and 56 each coordinate Mg(2+).

The protein belongs to the P-Pant transferase superfamily. AcpS family. Requires Mg(2+) as cofactor.

It localises to the cytoplasm. It carries out the reaction apo-[ACP] + CoA = holo-[ACP] + adenosine 3',5'-bisphosphate + H(+). In terms of biological role, transfers the 4'-phosphopantetheine moiety from coenzyme A to a Ser of acyl-carrier-protein. This is Holo-[acyl-carrier-protein] synthase from Chlamydia trachomatis serovar L2 (strain ATCC VR-902B / DSM 19102 / 434/Bu).